Reading from the N-terminus, the 166-residue chain is SPbeta prophage-derived uncharacterized protein YomO (166 aa).

This is SPbeta prophage-derived uncharacterized protein YomO (yomO) from Bacillus subtilis (strain 168).